The chain runs to 76 residues: DNA-directed RNA polymerase subunit omega (76 aa).

This sequence belongs to the RNA polymerase subunit omega family. In terms of assembly, in cyanobacteria the RNAP catalytic core is composed of 2 alpha, 1 beta, 1 beta', 1 gamma and 1 omega subunit. When a sigma factor is associated with the core the holoenzyme is formed, which can initiate transcription.

The catalysed reaction is RNA(n) + a ribonucleoside 5'-triphosphate = RNA(n+1) + diphosphate. Its function is as follows. Promotes RNA polymerase assembly. Latches the N- and C-terminal regions of the beta' subunit thereby facilitating its interaction with the beta and alpha subunits. The sequence is that of DNA-directed RNA polymerase subunit omega from Synechococcus elongatus (strain ATCC 33912 / PCC 7942 / FACHB-805) (Anacystis nidulans R2).